Consider the following 445-residue polypeptide: Phosphoglucosamine mutase (445 aa).

Ser-102 functions as the Phosphoserine intermediate in the catalytic mechanism. Residues Ser-102, Asp-241, Asp-243, and Asp-245 each coordinate Mg(2+). Ser-102 is modified (phosphoserine).

The protein belongs to the phosphohexose mutase family. The cofactor is Mg(2+). Activated by phosphorylation.

It carries out the reaction alpha-D-glucosamine 1-phosphate = D-glucosamine 6-phosphate. In terms of biological role, catalyzes the conversion of glucosamine-6-phosphate to glucosamine-1-phosphate. The chain is Phosphoglucosamine mutase from Escherichia coli O139:H28 (strain E24377A / ETEC).